We begin with the raw amino-acid sequence, 400 residues long: Enoyl-[acyl-carrier-protein] reductase [NADH] (400 aa).

NAD(+) contacts are provided by residues 48–53, 74–75, 111–112, and 139–140; these read GSSSGY, FE, DA, and LA. A substrate-binding site is contributed by Tyr-225. Tyr-235 functions as the Proton donor in the catalytic mechanism. Residues Lys-244 and 273-275 each bind NAD(+); that span reads VVT.

This sequence belongs to the TER reductase family. In terms of assembly, monomer.

The catalysed reaction is a 2,3-saturated acyl-[ACP] + NAD(+) = a (2E)-enoyl-[ACP] + NADH + H(+). It participates in lipid metabolism; fatty acid biosynthesis. Functionally, involved in the final reduction of the elongation cycle of fatty acid synthesis (FAS II). Catalyzes the reduction of a carbon-carbon double bond in an enoyl moiety that is covalently linked to an acyl carrier protein (ACP). This is Enoyl-[acyl-carrier-protein] reductase [NADH] from Aliivibrio salmonicida (strain LFI1238) (Vibrio salmonicida (strain LFI1238)).